Here is a 554-residue protein sequence, read N- to C-terminus: Sesquiterpene synthase 14b (554 aa).

Mg(2+)-binding residues include Asp305, Asp309, Asp449, and Glu457. The DDXXD motif motif lies at 305–309; that stretch reads DDLYD.

This sequence belongs to the terpene synthase family. Tpsa subfamily. The cofactor is Mg(2+). It depends on Mn(2+) as a cofactor.

It carries out the reaction (2E,6E)-farnesyl diphosphate = (E)-gamma-bisabolene + diphosphate. The enzyme catalyses (2Z,6Z)-farnesyl diphosphate = (E)-gamma-bisabolene + diphosphate. The catalysed reaction is (2Z,6Z)-farnesyl diphosphate = (E)-alpha-bisabolene + diphosphate. It catalyses the reaction (2Z,6Z)-farnesyl diphosphate = (Z)-beta-farnesene + diphosphate. It carries out the reaction (2E,6E)-farnesyl diphosphate = (E)-beta-farnesene + diphosphate. The enzyme catalyses (2E,6E)-farnesyl diphosphate = (+)-thujopsene + diphosphate. The catalysed reaction is (2Z,6Z)-farnesyl diphosphate = (E)-beta-farnesene + diphosphate. It catalyses the reaction (2E,6E)-farnesyl diphosphate = (Z)-beta-farnesene + diphosphate. It carries out the reaction (2Z,6Z)-farnesyl diphosphate = beta-acoradiene + diphosphate. The enzyme catalyses (2Z,6Z)-farnesyl diphosphate = alpha-acoradiene + diphosphate. The catalysed reaction is (2Z,6Z)-farnesyl diphosphate = beta-bisabolene + diphosphate. It catalyses the reaction (2E,6E)-farnesyl diphosphate = (-)-alpha-cedrene + diphosphate. It carries out the reaction (2E,6E)-farnesyl diphosphate = beta-bisabolene + diphosphate. The enzyme catalyses (2E,6E)-farnesyl diphosphate = beta-acoradiene + diphosphate. The catalysed reaction is (2Z,6Z)-farnesyl diphosphate = (-)-alpha-cedrene + diphosphate. It catalyses the reaction (2E)-geranyl diphosphate = terpinolene + diphosphate. It carries out the reaction (2E)-geranyl diphosphate = limonene + diphosphate. The enzyme catalyses (2E)-geranyl diphosphate = beta-myrcene + diphosphate. The protein operates within secondary metabolite biosynthesis; terpenoid biosynthesis. Functionally, sesquiterpene synthase involved in the biosynthesis of volatile compounds. Mediates the conversion of (2E,6E)-farnesyl diphosphate ((EE)-FPP) into (+)-thujopsene, beta-bisabolene, alpha-cederene, beta-acoradiene, (E)-gamma-bisabolene, (Z)-alpha-bisabolene, (Z)-beta-farnesene and (E)-beta-farnesene, and of (2Z,6Z)-farnesyl diphosphate ((ZZ)-FPP) into (E)-gamma-bisabolene, (E)-alpha-bisabolene, (E)-beta-farnesene, (Z)-beta-farnesene, beta-bisabolene, beta-acoradiene and alpha-acoradiene. Can act with a low efficiency as a monoterpene synthase with geranyl diphosphate (GPP) as substrate, thus producing beta-myrcene, limonene and terpinolene. The polypeptide is Sesquiterpene synthase 14b (Solanum habrochaites (Wild tomato)).